We begin with the raw amino-acid sequence, 296 residues long: tRNA dimethylallyltransferase (296 aa).

An ATP-binding site is contributed by 11–18; the sequence is GPTAVGKT. 13–18 contributes to the substrate binding site; it reads TAVGKT. The interval 36–39 is interaction with substrate tRNA; that stretch reads DSQQ.

This sequence belongs to the IPP transferase family. As to quaternary structure, monomer. It depends on Mg(2+) as a cofactor.

It catalyses the reaction adenosine(37) in tRNA + dimethylallyl diphosphate = N(6)-dimethylallyladenosine(37) in tRNA + diphosphate. In terms of biological role, catalyzes the transfer of a dimethylallyl group onto the adenine at position 37 in tRNAs that read codons beginning with uridine, leading to the formation of N6-(dimethylallyl)adenosine (i(6)A). The chain is tRNA dimethylallyltransferase from Streptococcus equi subsp. zooepidemicus (strain H70).